The primary structure comprises 557 residues: NADP-dependent malic enzyme (557 aa).

Catalysis depends on Tyr91, which acts as the Proton donor. Arg144 is an NADP(+) binding site. The active-site Proton acceptor is Lys162. A divalent metal cation is bound by residues Glu234, Asp235, and Asp258. Residues Asp258, 290-307, and Asn397 contribute to the NADP(+) site; that span reads GAGE…MAME.

It belongs to the malic enzymes family. Homotetramer. The cofactor is Mg(2+). Requires Mn(2+) as cofactor.

Its subcellular location is the cytoplasm. The catalysed reaction is (S)-malate + NADP(+) = pyruvate + CO2 + NADPH. The enzyme catalyses oxaloacetate + H(+) = pyruvate + CO2. The polypeptide is NADP-dependent malic enzyme (ME1) (Anas platyrhynchos (Mallard)).